Consider the following 301-residue polypeptide: GTPase Era (301 aa).

An Era-type G domain is found at 6 to 173 (KSGFVAIVGR…LEQTNANLEI (168 aa)). The interval 14–21 (GRPNVGKS) is G1. A GTP-binding site is contributed by 14 to 21 (GRPNVGKS). A G2 region spans residues 40 to 44 (QTTRN). The G3 stretch occupies residues 61–64 (DTPG). Residues 61–65 (DTPGI) and 123–126 (NKID) contribute to the GTP site. Residues 123–126 (NKID) form a G4 region. A G5 region spans residues 152 to 154 (ISA). The KH type-2 domain maps to 204–282 (TREEVPHSVA…FLEIWVKVQK (79 aa)).

It belongs to the TRAFAC class TrmE-Era-EngA-EngB-Septin-like GTPase superfamily. Era GTPase family. As to quaternary structure, monomer.

The protein localises to the cytoplasm. The protein resides in the cell membrane. In terms of biological role, an essential GTPase that binds both GDP and GTP, with rapid nucleotide exchange. Plays a role in 16S rRNA processing and 30S ribosomal subunit biogenesis and possibly also in cell cycle regulation and energy metabolism. The polypeptide is GTPase Era (Listeria innocua serovar 6a (strain ATCC BAA-680 / CLIP 11262)).